The chain runs to 89 residues: Neuropeptide F (89 aa).

An N-terminal signal peptide occupies residues 1–29 (MASGTFTQRLLVALMIFALIADLSTLVAA). Phe-61 carries the post-translational modification Phenylalanine amide. Residues 65–89 (GGYLNPAIFGQDEQEVDWQDSTFSR) constitute a propeptide that is removed on maturation.

The protein belongs to the NPY family.

The protein localises to the secreted. Functionally, an integral part of the sensory system that mediates food signaling, providing the neural basis for the regulation of food response; coordinates larval foraging and social behavior changes during development. May have a hormonal role in females. This Anopheles gambiae (African malaria mosquito) protein is Neuropeptide F.